A 539-amino-acid polypeptide reads, in one-letter code: 2-isopropylmalate synthase (539 aa).

Residues 8 to 269 (VLIFDTTLRD…YFNPFFGRPP (262 aa)) form the Pyruvate carboxyltransferase domain. Mn(2+)-binding residues include aspartate 17, histidine 208, histidine 210, and asparagine 244. The segment at 408–539 (QLKLVQVSCG…DLAKVDKKGI (132 aa)) is regulatory domain.

This sequence belongs to the alpha-IPM synthase/homocitrate synthase family. LeuA type 1 subfamily. Homodimer. Mn(2+) is required as a cofactor.

The protein localises to the cytoplasm. The enzyme catalyses 3-methyl-2-oxobutanoate + acetyl-CoA + H2O = (2S)-2-isopropylmalate + CoA + H(+). It functions in the pathway amino-acid biosynthesis; L-leucine biosynthesis; L-leucine from 3-methyl-2-oxobutanoate: step 1/4. Functionally, catalyzes the condensation of the acetyl group of acetyl-CoA with 3-methyl-2-oxobutanoate (2-ketoisovalerate) to form 3-carboxy-3-hydroxy-4-methylpentanoate (2-isopropylmalate). The sequence is that of 2-isopropylmalate synthase from Prochlorococcus marinus (strain NATL1A).